A 730-amino-acid polypeptide reads, in one-letter code: Elongation factor 2 (730 aa).

The tr-type G domain maps to 19 to 260 (VMIRNIAIIA…MVIRFLPSPI (242 aa)). Residues 28-35 (AHIDHGKT), 94-98 (DTPGH), and 148-151 (NKVD) contribute to the GTP site. The residue at position 596 (histidine 596) is a Diphthamide.

The protein belongs to the TRAFAC class translation factor GTPase superfamily. Classic translation factor GTPase family. EF-G/EF-2 subfamily.

It localises to the cytoplasm. Its function is as follows. Catalyzes the GTP-dependent ribosomal translocation step during translation elongation. During this step, the ribosome changes from the pre-translocational (PRE) to the post-translocational (POST) state as the newly formed A-site-bound peptidyl-tRNA and P-site-bound deacylated tRNA move to the P and E sites, respectively. Catalyzes the coordinated movement of the two tRNA molecules, the mRNA and conformational changes in the ribosome. This chain is Elongation factor 2 (fusA), found in Methanococcoides methylutens.